A 360-amino-acid chain; its full sequence is tRNA pseudouridine synthase D (360 aa).

The Nucleophile role is filled by Asp-76. In terms of domain architecture, TRUD spans 151 to 332; that stretch reads GMPNFFGYQR…HGIYKEKNAW (182 aa).

Belongs to the pseudouridine synthase TruD family.

The catalysed reaction is uridine(13) in tRNA = pseudouridine(13) in tRNA. Responsible for synthesis of pseudouridine from uracil-13 in transfer RNAs. In Nitratiruptor sp. (strain SB155-2), this protein is tRNA pseudouridine synthase D.